The chain runs to 355 residues: WAT1-related protein At1g25270 (355 aa).

A run of 10 helical transmembrane segments spans residues 4 to 24, 33 to 53, 65 to 85, 94 to 114, 134 to 154, 175 to 195, 207 to 227, 244 to 264, 272 to 292, and 297 to 317; these read VVAM…FKIT, VLVA…ALIF, LLLL…ILYL, TFSA…GLVF, LLGA…IHIW, VSIL…LWLL, LYWN…IIAL, LLAT…LVAW, LFVT…GSFA, and LHLG…LVVW. The EamA 1 domain occupies 12–142; it reads FIFAGMFILF…TLLGACGALV (131 aa). The 107-residue stretch at 210-316 folds into the EamA 2 domain; that stretch reads NTSLMNGVGS…IMVGGVYLVV (107 aa).

The protein belongs to the drug/metabolite transporter (DMT) superfamily. Plant drug/metabolite exporter (P-DME) (TC 2.A.7.4) family.

It localises to the membrane. This is WAT1-related protein At1g25270 from Arabidopsis thaliana (Mouse-ear cress).